A 311-amino-acid chain; its full sequence is Probable cobalamin biosynthesis protein CobD (311 aa).

A run of 4 helical transmembrane segments spans residues 53–73, 76–96, 157–177, and 288–308; these read FIFGTLTTISVLFIVFGAIYG, ILINNIQNIYIKYIVYSFLIS, DSIIAPLFYAIFFGLEGAFIY, and FSIDVVIFSFIVLYSIYYVIF.

Belongs to the CobD/CbiB family.

The protein localises to the cell membrane. Its pathway is cofactor biosynthesis; adenosylcobalamin biosynthesis. In terms of biological role, converts cobyric acid to cobinamide by the addition of aminopropanol on the F carboxylic group. The sequence is that of Probable cobalamin biosynthesis protein CobD from Methanococcus aeolicus (strain ATCC BAA-1280 / DSM 17508 / OCM 812 / Nankai-3).